Reading from the N-terminus, the 196-residue chain is Pyridoxal 5'-phosphate synthase subunit PdxT (196 aa).

L-glutamine is bound at residue 46-48; that stretch reads GES. Cys78 acts as the Nucleophile in catalysis. L-glutamine is bound by residues Arg105 and 134–135; that span reads IR. Residues His170 and Glu172 each act as charge relay system in the active site.

The protein belongs to the glutaminase PdxT/SNO family. In the presence of PdxS, forms a dodecamer of heterodimers. Only shows activity in the heterodimer.

The enzyme catalyses aldehydo-D-ribose 5-phosphate + D-glyceraldehyde 3-phosphate + L-glutamine = pyridoxal 5'-phosphate + L-glutamate + phosphate + 3 H2O + H(+). It carries out the reaction L-glutamine + H2O = L-glutamate + NH4(+). Its pathway is cofactor biosynthesis; pyridoxal 5'-phosphate biosynthesis. Its function is as follows. Catalyzes the hydrolysis of glutamine to glutamate and ammonia as part of the biosynthesis of pyridoxal 5'-phosphate. The resulting ammonia molecule is channeled to the active site of PdxS. The protein is Pyridoxal 5'-phosphate synthase subunit PdxT of Pelotomaculum thermopropionicum (strain DSM 13744 / JCM 10971 / SI).